A 376-amino-acid chain; its full sequence is Peroxisomal targeting signal 2 receptor (376 aa).

6 WD repeats span residues 58-98 (DTQD…YPVM), 102-142 (EHQR…NTSL), 182-222 (DNND…PLFM), 226-267 (AHNG…PNVH), 279-319 (GHEF…TSRV), and 339-376 (AHTEFVMGCDWSLWGEPGWVVTTGWDEMVYVWNTQRLQ).

Belongs to the WD repeat peroxin-7 family. In terms of assembly, interacts with PEX20. Post-translationally, polyubiquitinated, leading to its degradation by the proteasome. Ubiquitination is dependent of PEX5 and PEX20 and takes place following recycling into the cytosol.

Its subcellular location is the cytoplasm. The protein localises to the cytosol. The protein resides in the peroxisome matrix. Functionally, receptor required for the peroxisomal import of proteins containing a C-terminal PTS2-type peroxisomal targeting signal, such as 3-oxoacyl-CoA thiolase. Specifically binds to cargo proteins containing a PTS2 peroxisomal targeting signal in the cytosol. Cargo protein-binding triggers interaction with PEX20 and formation of a ternary complex composed of PEX20 and PEX7 along with PTS2-containing cargo proteins, which is tranlocated into peroxisomes by passing through the peroxisomal docking complex. PEX7 receptor is then retrotranslocated into the cytosol, where it is ubiquitinated and degraded. This Komagataella phaffii (strain GS115 / ATCC 20864) (Yeast) protein is Peroxisomal targeting signal 2 receptor.